The sequence spans 156 residues: 6,7-dimethyl-8-ribityllumazine synthase (156 aa).

5-amino-6-(D-ribitylamino)uracil contacts are provided by residues Phe-22, Ala-57–Glu-59, and Thr-81–Ile-83. Gly-86–Thr-87 contributes to the (2S)-2-hydroxy-3-oxobutyl phosphate binding site. His-89 acts as the Proton donor in catalysis. Phe-114 contacts 5-amino-6-(D-ribitylamino)uracil. Arg-128 contributes to the (2S)-2-hydroxy-3-oxobutyl phosphate binding site.

The protein belongs to the DMRL synthase family. As to quaternary structure, forms an icosahedral capsid composed of 60 subunits, arranged as a dodecamer of pentamers.

It carries out the reaction (2S)-2-hydroxy-3-oxobutyl phosphate + 5-amino-6-(D-ribitylamino)uracil = 6,7-dimethyl-8-(1-D-ribityl)lumazine + phosphate + 2 H2O + H(+). The protein operates within cofactor biosynthesis; riboflavin biosynthesis; riboflavin from 2-hydroxy-3-oxobutyl phosphate and 5-amino-6-(D-ribitylamino)uracil: step 1/2. Its function is as follows. Catalyzes the formation of 6,7-dimethyl-8-ribityllumazine by condensation of 5-amino-6-(D-ribitylamino)uracil with 3,4-dihydroxy-2-butanone 4-phosphate. This is the penultimate step in the biosynthesis of riboflavin. The sequence is that of 6,7-dimethyl-8-ribityllumazine synthase from Enterobacter sp. (strain 638).